The chain runs to 331 residues: Eukaryotic translation initiation factor 2 subunit 2 (331 aa).

Disordered regions lie at residues 1-75 and 97-120; these read MSGD…DLNF and AIKDVKIESDAQEPAEPEDDLDIM. Position 2 is an N-acetylserine (Ser-2). Residues Ser-2 and Ser-13 each carry the phosphoserine modification. Residues 13-22 are compositionally biased toward basic residues; the sequence is SKKKKKKKKP. Thr-36 bears the Phosphothreonine mark. A compositionally biased stretch (basic and acidic residues) spans 40-51; the sequence is ETKEVEPEPTEE. At Ser-67 the chain carries Phosphoserine. Lys-102 is covalently cross-linked (Glycyl lysine isopeptide (Lys-Gly) (interchain with G-Cter in SUMO2)). Residue Ser-105 is modified to Phosphoserine. Positions 106–118 are enriched in acidic residues; that stretch reads DAQEPAEPEDDLD. Ser-158 and Ser-216 each carry phosphoserine. N6-acetyllysine is present on residues Lys-263 and Lys-291. The C4-type zinc-finger motif lies at 279-303; the sequence is CHTCRSPDTILQKDTRLYFLQCETC.

This sequence belongs to the eIF-2-beta/eIF-5 family. Eukaryotic translation initiation factor 2 eIF2 is a heterotrimeric complex composed of an alpha (EIF2S1), a beta (EIF2S2) and a gamma (EIF2S3) chain. eIF2 is member of the 43S pre-initiation complex (43S PIC). eIF2 forms a complex with at least CELF1/CUGBP1, CALR, CALR3, EIF2S1, EIF2S2, HSP90B1 and HSPA5. Interacts with BZW2/5MP1. Interacts with EIF5.

It is found in the cytoplasm. Its subcellular location is the cytosol. Functionally, component of the eIF2 complex that functions in the early steps of protein synthesis by forming a ternary complex with GTP and initiator tRNA. This complex binds to a 40S ribosomal subunit, followed by mRNA binding to form the 43S pre-initiation complex (43S PIC). Junction of the 60S ribosomal subunit to form the 80S initiation complex is preceded by hydrolysis of the GTP bound to eIF2 and release of an eIF2-GDP binary complex. In order for eIF2 to recycle and catalyze another round of initiation, the GDP bound to eIF2 must exchange with GTP by way of a reaction catalyzed by eIF2B. This chain is Eukaryotic translation initiation factor 2 subunit 2 (Eif2s2), found in Mus musculus (Mouse).